A 242-amino-acid polypeptide reads, in one-letter code: Small ribosomal subunit protein uS2 (242 aa).

The protein belongs to the universal ribosomal protein uS2 family.

The protein is Small ribosomal subunit protein uS2 of Neisseria meningitidis serogroup B (strain ATCC BAA-335 / MC58).